Reading from the N-terminus, the 289-residue chain is ATP synthase gamma chain (289 aa).

Belongs to the ATPase gamma chain family. F-type ATPases have 2 components, CF(1) - the catalytic core - and CF(0) - the membrane proton channel. CF(1) has five subunits: alpha(3), beta(3), gamma(1), delta(1), epsilon(1). CF(0) has three main subunits: a, b and c.

The protein localises to the cell inner membrane. Functionally, produces ATP from ADP in the presence of a proton gradient across the membrane. The gamma chain is believed to be important in regulating ATPase activity and the flow of protons through the CF(0) complex. This chain is ATP synthase gamma chain, found in Janthinobacterium sp. (strain Marseille) (Minibacterium massiliensis).